Here is a 1176-residue protein sequence, read N- to C-terminus: Pesticidal crystal protein Cry1Aa (1176 aa).

Belongs to the delta endotoxin family.

Its function is as follows. Promotes colloidosmotic lysis by binding to the midgut epithelial cells of many lepidopteran larvae. This is Pesticidal crystal protein Cry1Aa (cry1Aa) from Bacillus thuringiensis subsp. aizawai.